A 182-amino-acid polypeptide reads, in one-letter code: ATP-dependent protease subunit HslV (182 aa).

Residue Thr-12 is part of the active site. Na(+)-binding residues include Ala-167, Cys-170, and Thr-173.

Belongs to the peptidase T1B family. HslV subfamily. In terms of assembly, a double ring-shaped homohexamer of HslV is capped on each side by a ring-shaped HslU homohexamer. The assembly of the HslU/HslV complex is dependent on binding of ATP.

The protein resides in the cytoplasm. It catalyses the reaction ATP-dependent cleavage of peptide bonds with broad specificity.. With respect to regulation, allosterically activated by HslU binding. Protease subunit of a proteasome-like degradation complex believed to be a general protein degrading machinery. The chain is ATP-dependent protease subunit HslV from Pelodictyon phaeoclathratiforme (strain DSM 5477 / BU-1).